The primary structure comprises 121 residues: SLFELGKMILQETGKNPAKSYGAYGCYCGVLGRGKPKDATDRCCYVHKCCYKKLTGCDNKKDRYSYSWKDKTIVCGENNPCLKELCECDKAVAICLRENLNTYNKKYRYHLKPLCKKADAC.

Disulfide bonds link Cys26–Cys115, Cys28–Cys44, Cys43–Cys95, Cys49–Cys121, Cys50–Cys88, Cys57–Cys81, and Cys75–Cys86. Residues 105–117 (KKYRYHLKPLCKK) are important for membrane-damaging activities in eukaryotes and bacteria; heparin-binding.

This sequence belongs to the phospholipase A2 family. Group II subfamily. K49 sub-subfamily. Homodimer; non-covalently linked (probable alternative/compact dimer conformation in solution). In terms of tissue distribution, expressed by the venom gland.

The protein resides in the secreted. Snake venom phospholipase A2 homolog that lacks enzymatic activity. Is myotoxic and displays edema-inducing activities in mouse paw. Also displays cytotoxic activity against myotubes. A model of myotoxic mechanism has been proposed: an apo Lys49-PLA2 is activated by the entrance of a hydrophobic molecule (e.g. fatty acid) at the hydrophobic channel of the protein leading to a reorientation of a monomer. This reorientation causes a transition between 'inactive' to 'active' states, causing alignment of C-terminal and membrane-docking sites (MDoS) side-by-side and putting the membrane-disruption sites (MDiS) in the same plane, exposed to solvent and in a symmetric position for both monomers. The MDoS region stabilizes the toxin on membrane by the interaction of charged residues with phospholipid head groups. Subsequently, the MDiS region destabilizes the membrane with penetration of hydrophobic residues. This insertion causes a disorganization of the membrane, allowing an uncontrolled influx of ions (i.e. calcium and sodium), and eventually triggering irreversible intracellular alterations and cell death. The sequence is that of Basic phospholipase A2 homolog 2 from Bothrops brazili (Brazil's lancehead).